A 64-amino-acid polypeptide reads, in one-letter code: Large ribosomal subunit protein bL35 (64 aa).

Residues methionine 1 to glycine 17 show a composition bias toward basic residues. A disordered region spans residues methionine 1–glycine 64. Residues leucine 21–glutamate 33 show a composition bias toward basic and acidic residues.

Belongs to the bacterial ribosomal protein bL35 family.

The polypeptide is Large ribosomal subunit protein bL35 (Corynebacterium kroppenstedtii (strain DSM 44385 / JCM 11950 / CIP 105744 / CCUG 35717)).